The sequence spans 151 residues: Arginine repressor (151 aa).

The protein belongs to the ArgR family.

It is found in the cytoplasm. It functions in the pathway amino-acid biosynthesis; L-arginine biosynthesis [regulation]. In terms of biological role, regulates arginine biosynthesis genes. The chain is Arginine repressor from Heliobacterium modesticaldum (strain ATCC 51547 / Ice1).